Reading from the N-terminus, the 558-residue chain is DEAD-box ATP-dependent RNA helicase 49 (558 aa).

A Q motif motif is present at residues 16 to 44 (FSELKPPLSEDIIEALDRSGFEVCTPVQA). A Helicase ATP-binding domain is found at 47 to 226 (IPFLCSHKDV…KAGLRNAMEV (180 aa)). Residue 60 to 67 (AATGSGKT) participates in ATP binding. Positions 174–177 (DEAD) match the DEAD box motif. The Helicase C-terminal domain occupies 255–402 (QLVHLLIENK…ERKCSENASD (148 aa)). The segment at 506–558 (KDKLQQEKRGKRKKSSKEAVDDSNKASRKRKLTGRQRQTIQTAQDEEEMNLRL) is disordered. Residues 521-530 (SKEAVDDSNK) are compositionally biased toward basic and acidic residues. Residues 549–558 (QDEEEMNLRL) are compositionally biased toward acidic residues.

It belongs to the DEAD box helicase family. DDX55/SPB4 subfamily.

The enzyme catalyses ATP + H2O = ADP + phosphate + H(+). In Arabidopsis thaliana (Mouse-ear cress), this protein is DEAD-box ATP-dependent RNA helicase 49 (RH49).